The following is a 60-amino-acid chain: Large ribosomal subunit protein bL32 (60 aa).

Residues 1-23 are compositionally biased toward basic residues; sequence MACPKKKTSNAKRDQRRAHWRKQ. The tract at residues 1-60 is disordered; that stretch reads MACPKKKTSNAKRDQRRAHWRKQAAREAQKALSLGKSVLSGRSNSFVYPTKEEEEGEDEE.

It belongs to the bacterial ribosomal protein bL32 family.

The sequence is that of Large ribosomal subunit protein bL32 from Microcystis aeruginosa (strain NIES-843 / IAM M-2473).